Here is a 251-residue protein sequence, read N- to C-terminus: Triosephosphate isomerase (251 aa).

9–11 serves as a coordination point for substrate; that stretch reads NWK. H95 functions as the Electrophile in the catalytic mechanism. Catalysis depends on E167, which acts as the Proton acceptor. Substrate contacts are provided by residues G173, S212, and 233 to 234; that span reads GG.

Belongs to the triosephosphate isomerase family. Homodimer.

The protein resides in the cytoplasm. It carries out the reaction D-glyceraldehyde 3-phosphate = dihydroxyacetone phosphate. It participates in carbohydrate biosynthesis; gluconeogenesis. It functions in the pathway carbohydrate degradation; glycolysis; D-glyceraldehyde 3-phosphate from glycerone phosphate: step 1/1. Its function is as follows. Involved in the gluconeogenesis. Catalyzes stereospecifically the conversion of dihydroxyacetone phosphate (DHAP) to D-glyceraldehyde-3-phosphate (G3P). In Pseudomonas aeruginosa (strain LESB58), this protein is Triosephosphate isomerase.